A 307-amino-acid chain; its full sequence is Quinolinate synthase (307 aa).

Iminosuccinate is bound by residues His23 and Ser40. Cys86 contributes to the [4Fe-4S] cluster binding site. Residues 112 to 114 and Ser129 each bind iminosuccinate; that span reads YVN. Residue Cys173 participates in [4Fe-4S] cluster binding. Residues 199-201 and Thr216 contribute to the iminosuccinate site; that span reads HPE. [4Fe-4S] cluster is bound at residue Cys265.

It belongs to the quinolinate synthase family. Type 2 subfamily. It depends on [4Fe-4S] cluster as a cofactor.

It is found in the cytoplasm. The catalysed reaction is iminosuccinate + dihydroxyacetone phosphate = quinolinate + phosphate + 2 H2O + H(+). The protein operates within cofactor biosynthesis; NAD(+) biosynthesis; quinolinate from iminoaspartate: step 1/1. Catalyzes the condensation of iminoaspartate with dihydroxyacetone phosphate to form quinolinate. This is Quinolinate synthase from Methanocaldococcus jannaschii (strain ATCC 43067 / DSM 2661 / JAL-1 / JCM 10045 / NBRC 100440) (Methanococcus jannaschii).